The sequence spans 106 residues: uncharacterized protein (106 aa).

The protein belongs to the csb family.

This is an uncharacterized protein from Dictyostelium discoideum (Social amoeba).